A 541-amino-acid polypeptide reads, in one-letter code: Arginine--tRNA ligase (541 aa).

Positions 119 to 129 (ANPTGPLHIGH) match the 'HIGH' region motif.

It belongs to the class-I aminoacyl-tRNA synthetase family. Monomer.

Its subcellular location is the cytoplasm. It catalyses the reaction tRNA(Arg) + L-arginine + ATP = L-arginyl-tRNA(Arg) + AMP + diphosphate. This Helicobacter pylori (strain HPAG1) protein is Arginine--tRNA ligase.